Consider the following 258-residue polypeptide: Exu regulon transcriptional regulator (258 aa).

One can recognise an HTH gntR-type domain in the interval 7–75 (RRLYQQLAAD…KGSGIHVVSN (69 aa)). The H-T-H motif DNA-binding region spans 35-54 (ERFIADEKNVSRTVVREAII).

Functionally, repressor for the exu regulon that encode genes involved in hexuronate utilization. It regulates the ExuT, UxaCA and UxuRAB operons. Binds D-tagaturonate and D-fructuronate as inducers. This chain is Exu regulon transcriptional regulator (exuR), found in Escherichia coli O157:H7.